A 215-amino-acid chain; its full sequence is Protein-methionine-sulfoxide reductase heme-binding subunit MsrQ (215 aa).

Helical transmembrane passes span 17–37 (AAIWSLYVIGLCPGLWYFYLA), 50–70 (FEHLLGIWALRFLCLGLLVTP), 85–105 (ALGLIAFYYVLAHFTVYLVLD), 121–141 (PYIMLGMAGLIILIPLALTSN), 152–172 (WNTLHKLVYLVLIVGVLHFVL), and 177–197 (ITLEPVFYISTMVVLLGYRLV).

This sequence belongs to the MsrQ family. In terms of assembly, heterodimer of a catalytic subunit (MsrP) and a heme-binding subunit (MsrQ). It depends on FMN as a cofactor. The cofactor is heme b.

It is found in the cell inner membrane. In terms of biological role, part of the MsrPQ system that repairs oxidized periplasmic proteins containing methionine sulfoxide residues (Met-O), using respiratory chain electrons. Thus protects these proteins from oxidative-stress damage caused by reactive species of oxygen and chlorine generated by the host defense mechanisms. MsrPQ is essential for the maintenance of envelope integrity under bleach stress, rescuing a wide series of structurally unrelated periplasmic proteins from methionine oxidation. MsrQ provides electrons for reduction to the reductase catalytic subunit MsrP, using the quinone pool of the respiratory chain. This is Protein-methionine-sulfoxide reductase heme-binding subunit MsrQ from Agrobacterium fabrum (strain C58 / ATCC 33970) (Agrobacterium tumefaciens (strain C58)).